Consider the following 61-residue polypeptide: Sec-independent protein translocase protein TatA (61 aa).

A helical transmembrane segment spans residues 2–22 (GLSGISPLSLLLILAIIVALF).

It belongs to the TatA/E family. In terms of assembly, the Tat system comprises two distinct complexes: a TatABC complex, containing multiple copies of TatA, TatB and TatC subunits, and a separate TatA complex, containing only TatA subunits. Substrates initially bind to the TatABC complex, which probably triggers association of the separate TatA complex to form the active translocon.

It is found in the cell inner membrane. Its function is as follows. Part of the twin-arginine translocation (Tat) system that transports large folded proteins containing a characteristic twin-arginine motif in their signal peptide across membranes. TatA could form the protein-conducting channel of the Tat system. In Legionella pneumophila (strain Corby), this protein is Sec-independent protein translocase protein TatA.